Here is a 257-residue protein sequence, read N- to C-terminus: Imidazole glycerol phosphate synthase subunit HisF (257 aa).

Residues D12 and D131 contribute to the active site.

The protein belongs to the HisA/HisF family. As to quaternary structure, heterodimer of HisH and HisF.

It is found in the cytoplasm. The enzyme catalyses 5-[(5-phospho-1-deoxy-D-ribulos-1-ylimino)methylamino]-1-(5-phospho-beta-D-ribosyl)imidazole-4-carboxamide + L-glutamine = D-erythro-1-(imidazol-4-yl)glycerol 3-phosphate + 5-amino-1-(5-phospho-beta-D-ribosyl)imidazole-4-carboxamide + L-glutamate + H(+). Its pathway is amino-acid biosynthesis; L-histidine biosynthesis; L-histidine from 5-phospho-alpha-D-ribose 1-diphosphate: step 5/9. In terms of biological role, IGPS catalyzes the conversion of PRFAR and glutamine to IGP, AICAR and glutamate. The HisF subunit catalyzes the cyclization activity that produces IGP and AICAR from PRFAR using the ammonia provided by the HisH subunit. The protein is Imidazole glycerol phosphate synthase subunit HisF of Nocardia farcinica (strain IFM 10152).